Reading from the N-terminus, the 207-residue chain is Outer-membrane lipoprotein LolB (207 aa).

Positions 1-21 (MPLPDFRLIRLLPLAALVLTA) are cleaved as a signal peptide. A lipid anchor (N-palmitoyl cysteine) is attached at Cys-22. Cys-22 carries S-diacylglycerol cysteine lipidation.

Belongs to the LolB family. As to quaternary structure, monomer.

It localises to the cell outer membrane. In terms of biological role, plays a critical role in the incorporation of lipoproteins in the outer membrane after they are released by the LolA protein. The sequence is that of Outer-membrane lipoprotein LolB from Escherichia coli O7:K1 (strain IAI39 / ExPEC).